The following is a 295-amino-acid chain: Uridine and thymidine phosphorylase (295 aa).

Phosphate-binding positions include Arg-81 and 125-128 (RLGT). Residues Gln-203 and Arg-205 each coordinate substrate.

This sequence belongs to the PNP/UDP phosphorylase family. Expressed in hypodermis, pharynx, spermatheca and gonad.

The catalysed reaction is uridine + phosphate = alpha-D-ribose 1-phosphate + uracil. It catalyses the reaction thymidine + phosphate = 2-deoxy-alpha-D-ribose 1-phosphate + thymine. The enzyme catalyses 2'-deoxyuridine + phosphate = 2-deoxy-alpha-D-ribose 1-phosphate + uracil. It participates in pyrimidine metabolism; UMP biosynthesis via salvage pathway; uracil from uridine (phosphorylase route): step 1/1. It functions in the pathway pyrimidine metabolism; dTMP biosynthesis via salvage pathway; dTMP from thymine: step 1/2. Its function is as follows. Catalyzes the reversible phosphorylytic cleavage of uridine and thymidine to uracil and ribose-phosphate or thymine and deoxyribose-1-phosphate. The produced molecules are then utilized as carbon and energy sources or in the rescue of pyrimidine bases for nucleotide synthesis. Required for normal lifespan. The polypeptide is Uridine and thymidine phosphorylase (Caenorhabditis elegans).